Reading from the N-terminus, the 458-residue chain is Tyrosine phenol-lyase (458 aa).

An N6-(pyridoxal phosphate)lysine modification is found at K258.

It belongs to the beta-eliminating lyase family. In terms of assembly, homotetramer. Requires pyridoxal 5'-phosphate as cofactor.

It carries out the reaction L-tyrosine + H2O = phenol + pyruvate + NH4(+). This is Tyrosine phenol-lyase (tpl) from Symbiobacterium sp. (strain SC-1).